Reading from the N-terminus, the 179-residue chain is Large ribosomal subunit protein uL5 (179 aa).

It belongs to the universal ribosomal protein uL5 family. Part of the 50S ribosomal subunit; part of the 5S rRNA/L5/L18/L25 subcomplex. Contacts the 5S rRNA and the P site tRNA. Forms a bridge to the 30S subunit in the 70S ribosome.

Its function is as follows. This is one of the proteins that bind and probably mediate the attachment of the 5S RNA into the large ribosomal subunit, where it forms part of the central protuberance. In the 70S ribosome it contacts protein S13 of the 30S subunit (bridge B1b), connecting the 2 subunits; this bridge is implicated in subunit movement. Contacts the P site tRNA; the 5S rRNA and some of its associated proteins might help stabilize positioning of ribosome-bound tRNAs. The sequence is that of Large ribosomal subunit protein uL5 from Synechococcus sp. (strain RCC307).